Reading from the N-terminus, the 132-residue chain is Dinoflagellate viral nucleoprotein 5 (132 aa).

Over residues 1 to 44 (MAAMKKAMKVKKSAKKSAKKSGKKGGMKKKAKRVSKVARGKRAK) the composition is skewed to basic residues. Residues 1–84 (MAAMKKAMKV…KKQSEHGKKI (84 aa)) are disordered. Residues 57 to 66 (GGLTKNSLVK) are compositionally biased toward polar residues.

Phosphorylated.

The protein localises to the nucleus. It localises to the chromosome. Its function is as follows. DNA-binding protein, which similarly to histones, may compact DNA into chromatin. This chain is Dinoflagellate viral nucleoprotein 5, found in Hematodinium sp.